Consider the following 393-residue polypeptide: Beta-ureidopropionase (393 aa).

The CN hydrolase domain maps to 72 to 344 (VRVGLVQNRI…DGLLVTELNL (273 aa)). Glu119 acts as the Proton acceptor in catalysis. The active-site Proton donor is Lys196. The active-site Nucleophile is Cys233. Ser378 bears the Phosphoserine mark.

The protein belongs to the carbon-nitrogen hydrolase superfamily. BUP family. Homodimer, homotetramer, homooctamer; can also form higher homooligomers.

It localises to the cytoplasm. The catalysed reaction is 3-(carbamoylamino)propanoate + H2O + 2 H(+) = beta-alanine + NH4(+) + CO2. It catalyses the reaction 3-(carbamoylamino)-2-methylpropanoate + H2O + 2 H(+) = (R)-3-amino-2-methylpropanoate + NH4(+) + CO2. Its pathway is amino-acid biosynthesis; beta-alanine biosynthesis. Catalyzes a late step in pyrimidine degradation. Converts N-carbamoyl-beta-alanine (3-ureidopropanoate) into beta-alanine, ammonia and carbon dioxide. Likewise, converts N-carbamoyl-beta-aminoisobutyrate (3-ureidoisobutyrate) into beta-aminoisobutyrate, ammonia and carbon dioxide. This chain is Beta-ureidopropionase (Upb1), found in Mus musculus (Mouse).